The chain runs to 750 residues: Penicillin-binding protein 2x (750 aa).

A helical membrane pass occupies residues 29–49 (LSLLSVFVFAIFLVNFAVIIG). The active-site Acyl-ester intermediate is Ser-337. 2 consecutive PASTA domains span residues 632 to 691 (QQSP…ILSD) and 692 to 750 (KAEE…TLGD).

The protein belongs to the transpeptidase family.

It localises to the cell membrane. Its function is as follows. A transpeptidase that forms peptide cross-links between adjacent glycan strands in cell wall peptidoglycan (PG). Part of the divisome machinery that synthesizes the septal cross wall. Beta-lactams inactivate the PBPs by acylating an essential serine residue in the active site of these proteins. This is Penicillin-binding protein 2x (pbpX) from Streptococcus pneumoniae serotype 4 (strain ATCC BAA-334 / TIGR4).